A 164-amino-acid chain; its full sequence is UPF0225 protein Shewana3_2159 (164 aa).

Belongs to the UPF0225 family.

The sequence is that of UPF0225 protein Shewana3_2159 from Shewanella sp. (strain ANA-3).